The sequence spans 370 residues: Anthranilate phosphoribosyltransferase (370 aa).

The disordered stretch occupies residues 1-27 (MALSAEGSSGGSRGGSPKAEAASVPSW). 5-phospho-alpha-D-ribose 1-diphosphate contacts are provided by residues Gly-107, 110-111 (GD), Thr-115, 117-120 (NLST), 135-143 (KHGNRAASS), and Gly-147. Gly-107 contacts anthranilate. Position 119 (Ser-119) interacts with Mg(2+). Position 138 (Asn-138) interacts with anthranilate. Arg-193 contributes to the anthranilate binding site. Positions 251 and 252 each coordinate Mg(2+).

Belongs to the anthranilate phosphoribosyltransferase family. Homodimer. The cofactor is Mg(2+).

It carries out the reaction N-(5-phospho-beta-D-ribosyl)anthranilate + diphosphate = 5-phospho-alpha-D-ribose 1-diphosphate + anthranilate. It participates in amino-acid biosynthesis; L-tryptophan biosynthesis; L-tryptophan from chorismate: step 2/5. Its function is as follows. Catalyzes the transfer of the phosphoribosyl group of 5-phosphorylribose-1-pyrophosphate (PRPP) to anthranilate to yield N-(5'-phosphoribosyl)-anthranilate (PRA). The chain is Anthranilate phosphoribosyltransferase from Mycobacterium bovis (strain ATCC BAA-935 / AF2122/97).